The primary structure comprises 174 residues: ATP-dependent protease subunit HslV (174 aa).

Residue threonine 2 is part of the active site. Na(+) contacts are provided by glycine 157, cysteine 160, and threonine 163.

This sequence belongs to the peptidase T1B family. HslV subfamily. In terms of assembly, a double ring-shaped homohexamer of HslV is capped on each side by a ring-shaped HslU homohexamer. The assembly of the HslU/HslV complex is dependent on binding of ATP.

Its subcellular location is the cytoplasm. The catalysed reaction is ATP-dependent cleavage of peptide bonds with broad specificity.. With respect to regulation, allosterically activated by HslU binding. Protease subunit of a proteasome-like degradation complex believed to be a general protein degrading machinery. This chain is ATP-dependent protease subunit HslV, found in Shewanella oneidensis (strain ATCC 700550 / JCM 31522 / CIP 106686 / LMG 19005 / NCIMB 14063 / MR-1).